The chain runs to 112 residues: Photosystem II reaction center Psb28 protein (112 aa).

The protein belongs to the Psb28 family. As to quaternary structure, part of the photosystem II complex.

The protein resides in the plastid. Its subcellular location is the cyanelle thylakoid membrane. In Cyanophora paradoxa, this protein is Photosystem II reaction center Psb28 protein.